Here is a 260-residue protein sequence, read N- to C-terminus: Tropinone reductase 2 (260 aa).

13–37 lines the NADP(+) pocket; sequence LVTGGSRGIGYGIVEELANLGASVY. S146 serves as a coordination point for substrate. Y159 acts as the Proton acceptor in catalysis.

This sequence belongs to the short-chain dehydrogenases/reductases (SDR) family.

It catalyses the reaction pseudotropine + NADP(+) = tropinone + NADPH + H(+). Its pathway is alkaloid biosynthesis; tropane alkaloid biosynthesis. Catalyzes the stereospecific reduction of tropinone to pseudotropine. The protein is Tropinone reductase 2 (TR2) of Hyoscyamus niger (Black henbane).